A 169-amino-acid chain; its full sequence is Transcription antitermination protein NusB (169 aa).

A disordered region spans residues 147-169 (RGLIDQSFSRPQKPESEATEIEE).

It belongs to the NusB family.

Functionally, involved in transcription antitermination. Required for transcription of ribosomal RNA (rRNA) genes. Binds specifically to the boxA antiterminator sequence of the ribosomal RNA (rrn) operons. This Chlorobium chlorochromatii (strain CaD3) protein is Transcription antitermination protein NusB.